The primary structure comprises 107 residues: UPF0060 membrane protein RPB_2370 (107 aa).

Helical transmembrane passes span 5–25, 31–51, 61–81, and 85–105; these read IIYV…WGWL, VWWL…LTLV, AAYG…VEGV, and RWDV…LWGP.

The protein belongs to the UPF0060 family.

The protein resides in the cell inner membrane. The sequence is that of UPF0060 membrane protein RPB_2370 from Rhodopseudomonas palustris (strain HaA2).